The sequence spans 92 residues: Small ribosomal subunit protein uS19 (92 aa).

It belongs to the universal ribosomal protein uS19 family.

Its function is as follows. Protein S19 forms a complex with S13 that binds strongly to the 16S ribosomal RNA. The protein is Small ribosomal subunit protein uS19 of Pelobacter propionicus (strain DSM 2379 / NBRC 103807 / OttBd1).